A 191-amino-acid polypeptide reads, in one-letter code: Transcription factor HES-2 (191 aa).

The disordered stretch occupies residues 1–26; that stretch reads MAPNVALADSMHNYQPKPGKRNQEAS. A bHLH domain is found at 28-85; sequence LRKTLKPLMEKRRRARINESLNQLKTLILPLIGKDNSRYSKLEKADILEMTVRFLRDI. The Orange domain maps to 97–130; it reads YKEGYRACVERLSAILGKSHVLTGEASNRLLEYL. Composition is skewed to polar residues over residues 159–173 and 182–191; these read RTSQFGSPLQNQPSS and QLNSSIWRPW. The segment at 159–191 is disordered; the sequence is RTSQFGSPLQNQPSSHRPAPCPPQLNSSIWRPW. The short motif at 188–191 is the WRPW motif element; it reads WRPW.

Transcription repression requires formation of a complex with a corepressor protein of the Groucho/TLE family. Homodimer, and heterodimer with the other bHLH proteins neurod1, neurod4/ath3, hes1/hairy1 and hes6r. Weakly interacts with the bHLH protein hey1/hrt1. Expressed in the animal half of the early cleavage stage embryo. During neurulation and organogenesis, the otic vesicles and retina are the main sites of expression; expression in otic placodes begins as early as stage 13.5, persisting in the otic vesicles at stage 30 and beyond. Also transiently expressed in the olfactory placodes. In addition, weakly expressed in primary neurons. Expression in the retina begins at stage 21, and is seen throughout the neural retina by stage 30. From stage 35 onwards, expression progressively declines in the central retina, while remaining high in the margins. At stage 41, expression becomes restricted to the ciliary marginal zone (CMZ) of the retina, the only region where retinogenesis is still occurring.

It localises to the nucleus. In terms of biological role, transcriptional repressor. Essential in the retina to govern glial versus neuronal differentiation. Promotes gliogenesis through the inhibition of neuronal differentiation by at least two distinct mechanisms; represses proneural gene transcription, and also physically interacts with proneural proteins, including neurod1. In Xenopus laevis (African clawed frog), this protein is Transcription factor HES-2 (hes2).